The sequence spans 327 residues: D-alanine--D-alanine ligase (327 aa).

Positions K113–A312 constitute an ATP-grasp domain. V139–T194 lines the ATP pocket. Residues D266, E279, and N281 each contribute to the Mg(2+) site.

Belongs to the D-alanine--D-alanine ligase family. It depends on Mg(2+) as a cofactor. Requires Mn(2+) as cofactor.

It is found in the cytoplasm. It carries out the reaction 2 D-alanine + ATP = D-alanyl-D-alanine + ADP + phosphate + H(+). The protein operates within cell wall biogenesis; peptidoglycan biosynthesis. Functionally, cell wall formation. This Cupriavidus metallidurans (strain ATCC 43123 / DSM 2839 / NBRC 102507 / CH34) (Ralstonia metallidurans) protein is D-alanine--D-alanine ligase.